A 711-amino-acid polypeptide reads, in one-letter code: Long-chain-fatty-acid--CoA ligase 4 (711 aa).

The helical; Signal-anchor for type III membrane protein transmembrane segment at 8–28 (LTIILLPVHLLITIYSALIFI) threads the bilayer. Topologically, residues 29 to 711 (PWYFLTNAKK…KDIERMYGGK (683 aa)) are cytoplasmic. S447 bears the Phosphoserine mark.

It belongs to the ATP-dependent AMP-binding enzyme family. Requires Mg(2+) as cofactor.

It is found in the mitochondrion outer membrane. The protein localises to the peroxisome membrane. Its subcellular location is the microsome membrane. It localises to the endoplasmic reticulum membrane. The protein resides in the cell membrane. The enzyme catalyses a long-chain fatty acid + ATP + CoA = a long-chain fatty acyl-CoA + AMP + diphosphate. It carries out the reaction (5Z,8Z,11Z,14Z)-eicosatetraenoate + ATP + CoA = (5Z,8Z,11Z,14Z)-eicosatetraenoyl-CoA + AMP + diphosphate. The catalysed reaction is hexadecanoate + ATP + CoA = hexadecanoyl-CoA + AMP + diphosphate. It catalyses the reaction (E)-hexadec-2-enoate + ATP + CoA = (2E)-hexadecenoyl-CoA + AMP + diphosphate. The enzyme catalyses 15-hydroxy-(5Z,8Z,11Z,13E)-eicosatetraenoate + ATP + CoA = 15-hydroxy-(5Z,8Z,11Z,13E)-eicosatetraenoyl-CoA + AMP + diphosphate. It carries out the reaction 12-hydroxy-(5Z,8Z,10E,14Z)-eicosatetraenoate + ATP + CoA = 12-hydroxy-(5Z,8Z,10E,14Z)-eicosatetraenoyl-CoA + AMP + diphosphate. The catalysed reaction is 5-hydroxy-(6E,8Z,11Z,14Z)-eicosatetraenoate + ATP + CoA = 5-hydroxy-(6E,8Z,11Z,14Z)-eicosatetraenoyl-CoA + AMP + diphosphate. It catalyses the reaction 5,6-epoxy-(8Z,11Z,14Z)-eicosatrienoate + ATP + CoA = 5,6-epoxy-(8Z,11Z,14Z)-eicosatrienoyl-CoA + AMP + diphosphate. The enzyme catalyses 14,15-epoxy-(5Z,8Z,11Z)-eicosatrienoate + ATP + CoA = 14,15-epoxy-(5Z,8Z,11Z)-eicosatrienoyl-CoA + AMP + diphosphate. It carries out the reaction 11,12-epoxy-(5Z,8Z,14Z)-eicosatrienoate + ATP + CoA = 11,12-epoxy-(5Z,8Z,14Z)-eicosatrienoyl-CoA + AMP + diphosphate. The catalysed reaction is 8,9-epoxy-(5Z,11Z,14Z)-eicosatrienoate + ATP + CoA = 8,9-epoxy-(5Z,11Z,14Z)-eicosatrienoyl-CoA + AMP + diphosphate. With respect to regulation, both triacsin C and rosiglitazone inhibit arachidonoyl-CoA ligase activity. Functionally, catalyzes the conversion of long-chain fatty acids to their active form acyl-CoA for both synthesis of cellular lipids, and degradation via beta-oxidation. Preferentially activates arachidonate and eicosapentaenoate as substrates. Preferentially activates 8,9-EET &gt; 14,15-EET &gt; 5,6-EET &gt; 11,12-EET. Modulates glucose-stimulated insulin secretion by regulating the levels of unesterified EETs. Modulates prostaglandin E2 secretion. This Homo sapiens (Human) protein is Long-chain-fatty-acid--CoA ligase 4 (ACSL4).